The chain runs to 380 residues: Shedu protein SduA (380 aa).

Its function is as follows. Only component of antiviral defense system Shedu. Expression of Shedu in B.subtilis (strain BEST7003) confers resistance to phages phi105, phi29, rho14 and to a lesser extent to SPP1. May be an endonuclease. The sequence is that of Shedu protein SduA from Bacillus cereus (strain B4264).